A 228-amino-acid polypeptide reads, in one-letter code: Response regulator SaeR (228 aa).

A Response regulatory domain is found at 3–116 (HLLIVDDEQD…ELVLRINNLL (114 aa)). At aspartate 51 the chain carries 4-aspartylphosphate. Residues 127–226 (VEQLSFDELT…VWGLGYKFER (100 aa)) constitute a DNA-binding region (ompR/PhoB-type).

Post-translationally, phosphorylated by SaeS.

It is found in the cytoplasm. Functionally, member of the two-component regulatory system SaeR/SaeS involved in the regulation of staphylococcal virulence factors in a strain-dependent fashion. Probably functions as a transcriptional regulator via a specific DNA-binding domain, recognizing motifs near the promoter sequences of target genes. The protein is Response regulator SaeR (saeR) of Staphylococcus aureus (strain USA300).